The sequence spans 172 residues: Ribosome maturation factor RimM (172 aa).

One can recognise a PRC barrel domain in the interval Glu94–Leu167.

It belongs to the RimM family. As to quaternary structure, binds ribosomal protein uS19.

Its subcellular location is the cytoplasm. Functionally, an accessory protein needed during the final step in the assembly of 30S ribosomal subunit, possibly for assembly of the head region. Essential for efficient processing of 16S rRNA. May be needed both before and after RbfA during the maturation of 16S rRNA. It has affinity for free ribosomal 30S subunits but not for 70S ribosomes. The sequence is that of Ribosome maturation factor RimM from Lacticaseibacillus paracasei (strain ATCC 334 / BCRC 17002 / CCUG 31169 / CIP 107868 / KCTC 3260 / NRRL B-441) (Lactobacillus paracasei).